A 373-amino-acid polypeptide reads, in one-letter code: Mannitol-1-phosphate 5-dehydrogenase (373 aa).

3–14 contacts NAD(+); it reads ALHFGAGNIGRG.

This sequence belongs to the mannitol dehydrogenase family.

It carries out the reaction D-mannitol 1-phosphate + NAD(+) = beta-D-fructose 6-phosphate + NADH + H(+). This Bacillus subtilis (strain 168) protein is Mannitol-1-phosphate 5-dehydrogenase (mtlD).